Consider the following 372-residue polypeptide: tRNA pseudouridine synthase D (372 aa).

Asp-85 serves as the catalytic Nucleophile. One can recognise a TRUD domain in the interval 160 to 330 (GFANYFGYQR…MQGSRRFMWG (171 aa)).

The protein belongs to the pseudouridine synthase TruD family.

It catalyses the reaction uridine(13) in tRNA = pseudouridine(13) in tRNA. Its function is as follows. Responsible for synthesis of pseudouridine from uracil-13 in transfer RNAs. The polypeptide is tRNA pseudouridine synthase D (Campylobacter jejuni subsp. jejuni serotype O:6 (strain 81116 / NCTC 11828)).